The following is a 278-amino-acid chain: Pca operon regulatory protein (278 aa).

Positions 31–91 (VAGISKGMAI…SDGHYFYLTP (61 aa)) constitute an HTH iclR-type domain. The H-T-H motif DNA-binding region spans 53 to 72 (ITMAAEKTGMTRAAARRHLL). Residues 106–278 (LPKISQPLLN…ETARELRNIL (173 aa)) enclose the IclR-ED domain.

Activates transcription of the pca operon. The protein is Pca operon regulatory protein (pcaU) of Acinetobacter baylyi (strain ATCC 33305 / BD413 / ADP1).